The sequence spans 549 residues: Cation/acetate symporter ActP (549 aa).

The next 13 helical transmembrane spans lie at 32-54 (IQAI…WASK), 75-97 (GMAI…LVYT), 102-124 (GLIY…AERL), 145-167 (IRIL…QMVG), 182-204 (VAVV…LATT), 211-233 (AILL…NFNF), 263-285 (ALSL…MRFF), 298-320 (FYAT…GAIL), 361-383 (AVAF…SAVS), 404-423 (VSKI…GILF), 428-450 (IAFM…ILLS), 462-484 (LVGG…TIWV), and 494-516 (YPYE…LFSI).

It belongs to the sodium:solute symporter (SSF) (TC 2.A.21) family.

The protein resides in the cell inner membrane. Its function is as follows. Transports acetate. In Photorhabdus laumondii subsp. laumondii (strain DSM 15139 / CIP 105565 / TT01) (Photorhabdus luminescens subsp. laumondii), this protein is Cation/acetate symporter ActP.